The following is a 357-amino-acid chain: Glutamine synthetase root isozyme 5 (357 aa).

The GS beta-grasp domain maps to 19–99 (IIAEYIWVGG…VMCDCYTPQG (81 aa)). The GS catalytic domain occupies 106–357 (KRYKAATVFS…ADTTILWKGN (252 aa)).

This sequence belongs to the glutamine synthetase family. Homooctamer. Found mainly in the cortical tissues of seedling roots, stem and seedling shoot.

The protein resides in the cytoplasm. The enzyme catalyses L-glutamate + NH4(+) + ATP = L-glutamine + ADP + phosphate + H(+). Plays a role in the flow of nitrogen into nitrogenous organic compounds. The chain is Glutamine synthetase root isozyme 5 (GS1-5) from Zea mays (Maize).